A 441-amino-acid chain; its full sequence is Serine carboxypeptidase-like 2 (441 aa).

Positions 1–29 (MANKYFSSVLKSLLLLLHLVFLSKQHVDS) are cleaved as a signal peptide. Cystine bridges form between C88/C331, C252/C266, and C290/C297. The N-linked (GlcNAc...) asparagine glycan is linked to N109. Residue S184 is part of the active site. N350 carries an N-linked (GlcNAc...) asparagine glycan. Residue D366 is part of the active site. N-linked (GlcNAc...) asparagine glycosylation occurs at N382. Residue H419 is part of the active site.

It belongs to the peptidase S10 family. Expressed in seedlings and roots.

It localises to the secreted. Functionally, probable carboxypeptidase. In Arabidopsis thaliana (Mouse-ear cress), this protein is Serine carboxypeptidase-like 2 (SCPL2).